The chain runs to 601 residues: MAYNITSLMTNFCLITTILSLTLSFKQNSDNNKITKYMRNAFIISLLPLIIYIDQQMDSSSSFTSTFNMISFNLLLGFEADMYCLTFFSIALYITWSIMQFSLWYMHEHNNTLFFKYLTMFLISMLFFLSANNLLQLILGWEGMGIMSFLLINWWHNRLEANSAAMQAIIYNRIGDTGLIIFMIWSALFTNSWNMKQIFILQNNSMDLWLPLLGIVLAATGKSAQFMLHPWLLSAMEGPTPVSALLHSSTMVVSGVFLLIRFYPMIKNSQMIISIILCLGAMTTLFAALCASSQTDIKKIIAFSTTSQLGLMTVTIGINQPQLAFLHMSTHAFFKALLFLCSASIIHTINNEQDIRKMGSLHLILPFTSSCTLISSLALMGMPYLSGFYSKDIILETLNMSYVNAWALLSTMLATALTSIYSTRLILLSMAMTPNINTLIFLKKDKNLFSPLIRLTLGSIIFGFIISTFFLPEKQPNFSIPFNSKILPTIMLILVSSLTLYFMNNHKFSHMPPLFFPSMSGYFPAIFHRLFSYYFLLFPKKVSSSLLDILWYETLGPKSISHNLSSSSSLFNKLSQGTINNYITIFVITILSSLLTSALYF.

17 helical membrane-spanning segments follow: residues 5–25, 37–54, 83–105, 112–129, 134–156, 169–189, 209–231, 240–260, 271–291, 300–320, 323–343, 363–383, 400–420, 451–471, 478–498, 508–528, and 581–601; these read ITSLMTNFCLITTILSLTLSF, YMRNAFIISLLPLIIYID, YCLTFFSIALYITWSIMQFSLWY, TLFFKYLTMFLISMLFFL, LLQLILGWEGMGIMSFLLINWWH, IIYNRIGDTGLIIFMIWSALF, WLPLLGIVLAATGKSAQFMLHPW, TPVSALLHSSTMVVSGVFLLI, MIISIILCLGAMTTLFAALCA, IIAFSTTSQLGLMTVTIGINQ, LAFLHMSTHAFFKALLFLCSA, LILPFTSSCTLISSLALMGMP, MSYVNAWALLSTMLATALTSI, PLIRLTLGSIIFGFIISTFFL, FSIPFNSKILPTIMLILVSSL, FSHMPPLFFPSMSGYFPAIFH, and NYITIFVITILSSLLTSALYF.

It belongs to the complex I subunit 5 family.

It is found in the mitochondrion inner membrane. The enzyme catalyses a ubiquinone + NADH + 5 H(+)(in) = a ubiquinol + NAD(+) + 4 H(+)(out). In terms of biological role, core subunit of the mitochondrial membrane respiratory chain NADH dehydrogenase (Complex I) that is believed to belong to the minimal assembly required for catalysis. Complex I functions in the transfer of electrons from NADH to the respiratory chain. The immediate electron acceptor for the enzyme is believed to be ubiquinone. The sequence is that of NADH-ubiquinone oxidoreductase chain 5 (MT-ND5) from Myxine glutinosa (Atlantic hagfish).